Reading from the N-terminus, the 285-residue chain is HTH-type transcriptional regulator YofA (285 aa).

In terms of domain architecture, HTH lysR-type spans 1–58; sequence MESGDLKIFQAVAREGSITKAAQMLNYVQSNVTARVHNLEEDLNIRLFHRTNRGMKLT. Residues 18-37 constitute a DNA-binding region (H-T-H motif); that stretch reads ITKAAQMLNYVQSNVTARVH.

The protein belongs to the LysR transcriptional regulatory family.

The protein localises to the cytoplasm. Functionally, regulates expression of the cell division protein ftsW, and is essential for cell viability during stationary phase. The chain is HTH-type transcriptional regulator YofA (yofA) from Bacillus subtilis (strain 168).